Reading from the N-terminus, the 426-residue chain is 3-phosphoshikimate 1-carboxyvinyltransferase (426 aa).

Residues lysine 20, serine 21, and arginine 25 each contribute to the 3-phosphoshikimate site. Lysine 20 lines the phosphoenolpyruvate pocket. The phosphoenolpyruvate site is built by glycine 92 and arginine 120. Residues serine 166, glutamine 168, aspartate 312, and lysine 339 each coordinate 3-phosphoshikimate. Glutamine 168 is a binding site for phosphoenolpyruvate. The Proton acceptor role is filled by aspartate 312. A phosphoenolpyruvate-binding site is contributed by arginine 385.

The protein belongs to the EPSP synthase family. As to quaternary structure, monomer.

Its subcellular location is the cytoplasm. It catalyses the reaction 3-phosphoshikimate + phosphoenolpyruvate = 5-O-(1-carboxyvinyl)-3-phosphoshikimate + phosphate. It functions in the pathway metabolic intermediate biosynthesis; chorismate biosynthesis; chorismate from D-erythrose 4-phosphate and phosphoenolpyruvate: step 6/7. Its function is as follows. Catalyzes the transfer of the enolpyruvyl moiety of phosphoenolpyruvate (PEP) to the 5-hydroxyl of shikimate-3-phosphate (S3P) to produce enolpyruvyl shikimate-3-phosphate and inorganic phosphate. This Streptococcus suis (strain 98HAH33) protein is 3-phosphoshikimate 1-carboxyvinyltransferase.